The primary structure comprises 56 residues: Male determiner protein Yob (56 aa).

Male determiner protein (M-factor) that controls male somatic sexual differentiation. Acts as a dominant factor that regulates the mRNA splicing of doublesex (dsx) transcripts and promotes expression of male splice forms of dsx. The sequence is that of Male determiner protein Yob from Anopheles gambiae (African malaria mosquito).